The chain runs to 974 residues: MNAPLPMNAAAQGARPTLAELEARDAFAARHIGPDSAEQQHMLKVLGFESRAALIDAVVPAAIRRRDGMSLGEFTAPLTEEAALGRLRALAGKNRVLKSFIGQGYYNTLTPGVILRNIFENPAWYTAYTPYQPEISQGRLEAMLNFQQMITDLTGLDIANASMLDEGTAAAEAMTLLQRVNKHASNTFYVAEDVLPQTLEVVRTRALPLGIEVKVGPAADAAQAHAFGVLLQYPGVNGDVADYRAIAEAVHASGGRVVAAADLLALTLIAAPGEWGADVTVGNSQRFGVPLGFGGPHAGYMAVKDEFKRSMPGRLVGVTIDAQGNKAYRLALQTREQHIRREKATSNICTAQVLLAVMASMYAVYHGPQGLKRIAQRVHRLTATLAAGLKTLGHTPLNATFFDTLTLETGFNTDAFHASATARGINLRHVDATRIGISFDETASRDDVIALWEIFAHGKAVPDFDTIEASVQDGFPATLARQSAYLTHPVFNTHHAEHEMLRYLRALADKDLALDRTMIPLGSCTMKLNATSEMIPVTWPEFSNIHPFAPLDQTVGYREMIDQLEAMLCAATGYAAVSLQPNAGSQGEYAGLLIIHAYHASRGESHRDICLIPSSAHGTNPASAQMAGMKVVVVACDENGNVDLADLAKKAEQHSKNLAAIMITYPSTHGVFEQGVQQICDIVHKHGGQVYVDGANMNAMVGVAAPGQFGGDVSHLNLHKTFCIPHGGGGPGVGPVAVGAHLADFLPNQDSVGYRRDENGIGGVSAAPFGSASILPISWMYIAMMGSAGLTAATENAILTANYVARRLSPHFPVLYTGQHGLVAHECILDLRPLQKATGISNEDVAKRLMDYGFHAPTMSFPVPGTLMIEPTESEALHELDRFIDAMIAIRGEIARVEDGSFDREDNPLKHAPHTAAVVVSDKWNHKYTREEAAYPVASLRTQKYWPPVGRADNVYGDRNLFCSCVPLSEYAED.

Lys-720 carries the post-translational modification N6-(pyridoxal phosphate)lysine.

Belongs to the GcvP family. In terms of assembly, the glycine cleavage system is composed of four proteins: P, T, L and H. Requires pyridoxal 5'-phosphate as cofactor.

It catalyses the reaction N(6)-[(R)-lipoyl]-L-lysyl-[glycine-cleavage complex H protein] + glycine + H(+) = N(6)-[(R)-S(8)-aminomethyldihydrolipoyl]-L-lysyl-[glycine-cleavage complex H protein] + CO2. The glycine cleavage system catalyzes the degradation of glycine. The P protein binds the alpha-amino group of glycine through its pyridoxal phosphate cofactor; CO(2) is released and the remaining methylamine moiety is then transferred to the lipoamide cofactor of the H protein. This is Glycine dehydrogenase (decarboxylating) from Cupriavidus metallidurans (strain ATCC 43123 / DSM 2839 / NBRC 102507 / CH34) (Ralstonia metallidurans).